Consider the following 116-residue polypeptide: Insulin (116 aa).

The signal sequence occupies residues 1-24; it reads MAALWLQSFSLLVLLVVSWPGSQA. 3 disulfides stabilise this stretch: Cys-32–Cys-102, Cys-44–Cys-115, and Cys-101–Cys-106. Residues 56–93 constitute a propeptide, c peptide; the sequence is DVDQLLGFLPPKSGGAAAAGADNEVAEFAFKDQMEMMV.

This sequence belongs to the insulin family. In terms of assembly, heterodimer of a B chain and an A chain linked by two disulfide bonds.

The protein resides in the secreted. In terms of biological role, insulin decreases blood glucose concentration. It increases cell permeability to monosaccharides, amino acids and fatty acids. It accelerates glycolysis, the pentose phosphate cycle, and glycogen synthesis in liver. This is Insulin (ins) from Lophius americanus (American angler).